A 62-amino-acid chain; its full sequence is 2-hydroxymuconate tautomerase (62 aa).

The Proton acceptor; via imino nitrogen role is filled by Pro-2. 9–12 (LEGR) provides a ligand contact to substrate.

The protein belongs to the 4-oxalocrotonate tautomerase family. As to quaternary structure, homohexamer.

The catalysed reaction is (2Z,4E)-2-hydroxyhexa-2,4-dienedioate = (3E)-2-oxohex-3-enedioate. Its function is as follows. Catalyzes both 1,3- and 1,5-keto-enol tautomerization of the diacid 2-hydroxymuconate (2-hydroxy-2,4-hexadienedioate) to produce 2-oxo-4-hexenedioate. This reaction is highly stereoselective and produces a mixture of stereoisomers, where the (3S)-isomer of 2-oxo-4-hexenedioate predominates. Also catalyzes the tautomerization of 2-hydroxymuconate to 2-oxo-3-hexenedioate, however this reaction is slower and occurs after the tautomerization of 2-hydroxymuconate to 2-oxo-4-hexenedioate. Using 2-hydroxy-2,4-pentadienoate, phenylenolpyruvate, (p-hydroxyphenyl)-enolpyruvate and 2-hydroxy-2,4-heptadiene-1,7-dioate, YwhB is a highly efficient 1,3-keto-enol tautomerase, but clearly not a 1,5-keto-enol tautomerase. Tautomerization of the two monoacids 2-hydroxy-2,4-pentadienoate and phenylenolpyruvate produces a mixture of stereoisomers, where the (3R)-isomers predominate. This Bacillus subtilis (strain 168) protein is 2-hydroxymuconate tautomerase (ywhB).